We begin with the raw amino-acid sequence, 379 residues long: Cytochrome b (379 aa).

4 helical membrane passes run 33–53 (FGSLLGLCLIVQTLTGLFLAM), 77–98 (WLIRNLHANGASMFFICLYLHI), 113–133 (WNIGVVLLLLVMAAAFVGYVL), and 178–198 (FFTFHFLLPFTIIALTMLHLL). Positions 83 and 97 each coordinate heme b. Residues histidine 182 and histidine 196 each coordinate heme b. Histidine 201 is a binding site for a ubiquinone. 4 helical membrane-spanning segments follow: residues 226–246 (YKDLLGATLMITTLLTLVLFS), 288–308 (LGGVLALLFSILILMIVPLLH), 320–340 (FSQTLFWLLISNVLILTWIGG), and 347–367 (FIIIGQLASVTYFTLFLVVMP).

Belongs to the cytochrome b family. As to quaternary structure, the cytochrome bc1 complex contains 3 respiratory subunits (MT-CYB, CYC1 and UQCRFS1), 2 core proteins (UQCRC1 and UQCRC2) and probably 6 low-molecular weight proteins. Heme b serves as cofactor.

Its subcellular location is the mitochondrion inner membrane. In terms of biological role, component of the ubiquinol-cytochrome c reductase complex (complex III or cytochrome b-c1 complex) that is part of the mitochondrial respiratory chain. The b-c1 complex mediates electron transfer from ubiquinol to cytochrome c. Contributes to the generation of a proton gradient across the mitochondrial membrane that is then used for ATP synthesis. This Iguana iguana (Common iguana) protein is Cytochrome b (MT-CYB).